A 134-amino-acid polypeptide reads, in one-letter code: Large ribosomal subunit protein uL16c (134 aa).

This sequence belongs to the universal ribosomal protein uL16 family. As to quaternary structure, part of the 50S ribosomal subunit.

It is found in the plastid. The protein localises to the chloroplast. The polypeptide is Large ribosomal subunit protein uL16c (Gnetum parvifolium (Small-leaved jointfir)).